A 321-amino-acid chain; its full sequence is Ferredoxin--NADP reductase (321 aa).

FAD contacts are provided by glutamate 33, glutamine 41, tyrosine 46, valine 86, leucine 119, aspartate 277, and serine 318.

The protein belongs to the ferredoxin--NADP reductase type 2 family. As to quaternary structure, homodimer. FAD is required as a cofactor.

The enzyme catalyses 2 reduced [2Fe-2S]-[ferredoxin] + NADP(+) + H(+) = 2 oxidized [2Fe-2S]-[ferredoxin] + NADPH. In Lactococcus lactis subsp. cremoris (strain MG1363), this protein is Ferredoxin--NADP reductase.